Reading from the N-terminus, the 256-residue chain is MQWQDQAIILGVKRHGETSVIAEVMTRGRGRHLGLVRSGRSRAMRPVLQPGNAVEVVWRARLDEHLGEFRVEPVTLRAARLMDTATAVYGVQAMGALLRLLPERDPHPHLFDALEVILDHLHNPADAGELFVRFELAVLNDLGFGLDLAECAATGARSDLAYVSPKSGRAVSRSAGAPWADKMLLLPPFLGVEGNHAADVDSLAAAFRLTGFFLHRHVYEPRGIEAVAARDGFVQAALKALNPASQTLSSPNGVSA.

This sequence belongs to the RecO family.

Involved in DNA repair and RecF pathway recombination. The protein is DNA repair protein RecO of Rhizobium etli (strain ATCC 51251 / DSM 11541 / JCM 21823 / NBRC 15573 / CFN 42).